A 106-amino-acid polypeptide reads, in one-letter code: Ferredoxin (106 aa).

Positions 9 and 17 each coordinate [3Fe-4S] cluster. Positions 21, 40, 43, and 46 each coordinate [4Fe-4S] cluster. One can recognise a 4Fe-4S ferredoxin-type domain in the interval 31 to 60; it reads RMLYIHPDECVDCGACEPVCPVEAIYYEDD. Cys-50 serves as a coordination point for [3Fe-4S] cluster. The segment at 84–106 is disordered; that stretch reads GAAKVGKVDRDVEPVSSLPPQGE.

The cofactor is [4Fe-4S] cluster. [3Fe-4S] cluster is required as a cofactor.

In terms of biological role, ferredoxins are iron-sulfur proteins that transfer electrons in a wide variety of metabolic reactions. This chain is Ferredoxin (fdxA), found in Saccharopolyspora erythraea (Streptomyces erythraeus).